Reading from the N-terminus, the 93-residue chain is Small ribosomal subunit protein uS19 (93 aa).

The protein belongs to the universal ribosomal protein uS19 family.

Functionally, protein S19 forms a complex with S13 that binds strongly to the 16S ribosomal RNA. The chain is Small ribosomal subunit protein uS19 from Ligilactobacillus salivarius (strain UCC118) (Lactobacillus salivarius).